A 1238-amino-acid polypeptide reads, in one-letter code: Virulence sensor protein BvgS (1238 aa).

A signal peptide spans 1-32 (MPAPHRLYPRSLICLAQALLAWALLAWAPAQA). Residues 33 to 307 (SQELTLVGKA…REQQWMADHP (275 aa)) are Cytoplasmic-facing. Residues 308–331 (VVKVAVLNLFAPFTLFRTDEQFGG) form a helical membrane-spanning segment. Topologically, residues 332–541 (ISAAVLQLLQ…PRTWYAYRNE (210 aa)) are periplasmic. The chain crosses the membrane as a helical span at residues 542–563 (IYLLIGLGLLSALLFLSWIVYL). At 564-1238 (RRQIRQRKRA…LEQRPHQDQP (675 aa)) the chain is on the cytoplasmic side. Positions 580–651 (QLEFMRVLID…MHEFLLTRVA (72 aa)) constitute a PAS domain. In terms of domain architecture, PAC spans 652 to 708 (AEREPRFEDRDVTLHGRTRHVYQWTIPYGDSLGELKGIIGGWIDITERAELLRKLHD). The region spanning 726-948 (TMSHEIRTPM…TVSVDLRLTM (223 aa)) is the Histidine kinase domain. At histidine 729 the chain carries Phosphohistidine; by autocatalysis. The region spanning 974-1095 (RVLVVDDHKP…ALRQRLNEAV (122 aa)) is the Response regulatory domain. Position 1023 is a 4-aspartylphosphate (aspartate 1023). The region spanning 1133–1228 (DEALIRQLLE…AALETQLRAW (96 aa)) is the HPt domain. Histidine 1172 carries the phosphohistidine modification.

Post-translationally, activation requires a sequential transfer of a phosphate group from a His in the primary transmitter domain, to an Asp in the receiver domain and to a His in the secondary transmitter domain.

The protein localises to the cell inner membrane. It catalyses the reaction ATP + protein L-histidine = ADP + protein N-phospho-L-histidine.. In terms of biological role, member of the two-component regulatory system BvgS/BvgA. Phosphorylates BvgA via a four-step phosphorelay in response to environmental signals. In Bordetella pertussis (strain Tohama I / ATCC BAA-589 / NCTC 13251), this protein is Virulence sensor protein BvgS (bvgS).